The following is a 557-amino-acid chain: 2-isopropylmalate synthase (557 aa).

Positions 33-307 constitute a Pyruvate carboxyltransferase domain; that stretch reads PIWCSSDLRD…DPQLDFSDID (275 aa). Mg(2+) contacts are provided by aspartate 42, histidine 246, histidine 248, and asparagine 282. Positions 439–557 are regulatory domain; the sequence is ANAPYALVSH…SLSQQEAKAA (119 aa).

The protein belongs to the alpha-IPM synthase/homocitrate synthase family. LeuA type 2 subfamily. In terms of assembly, homodimer. The cofactor is Mg(2+).

Its subcellular location is the cytoplasm. It catalyses the reaction 3-methyl-2-oxobutanoate + acetyl-CoA + H2O = (2S)-2-isopropylmalate + CoA + H(+). Its pathway is amino-acid biosynthesis; L-leucine biosynthesis; L-leucine from 3-methyl-2-oxobutanoate: step 1/4. Its function is as follows. Catalyzes the condensation of the acetyl group of acetyl-CoA with 3-methyl-2-oxobutanoate (2-ketoisovalerate) to form 3-carboxy-3-hydroxy-4-methylpentanoate (2-isopropylmalate). This chain is 2-isopropylmalate synthase, found in Pseudomonas putida (strain GB-1).